Reading from the N-terminus, the 427-residue chain is Caspase recruitment domain-containing protein 8 (427 aa).

The interval 1–23 (MGIPTSSVSEEQESSEGQDSGDI) is disordered. The segment at 51-186 (FLGPEGNVDV…FYAVLEKPSF (136 aa)) is ZU5. The 286-residue stretch at 51–336 (FLGPEGNVDV…IQLGAASAPP (286 aa)) folds into the FIIND domain. The UPA stretch occupies residues 187–336 (SLMGILLRIA…IQLGAASAPP (150 aa)). One can recognise a CARD domain in the interval 336-426 (PAFSGAAFVK…YLVSYLRQQS (91 aa)).

As to quaternary structure, interacts with DPP9; leading to inhibit activation of the inflammasome. DPP9 acts via formation of a ternary complex, composed of a DPP9 homodimer, one full-length CARD8 protein, and one cleaved C-terminus of CARD8 (Caspase recruitment domain-containing protein 8, C-terminus). Interacts with DPP8; leading to inhibit activation of the inflammasome, probably via formation of a ternary complex with DPP8. Interacts with NLRP3. Interacts with IKBKG/NEMO. Interacts with DRAL. Binds to caspase-1 (CASP1), CARD16/pseudo-ICE and CARD18/ICEBERG. Interacts with NLRP2 (via NACHT domain). Interacts with the C-terminal part of CARD8 (Caspase recruitment domain-containing protein 8, C-terminus) in absence of pathogens and other damage-associated signals. In terms of assembly, interacts with the N-terminal part of CARD8 (Caspase recruitment domain-containing protein 8, N-terminus) in absence of pathogens and other damage-associated signals. Homomultimer; forms the CARD8 inflammasome polymeric complex, a filament composed of homopolymers of this form in response to pathogens and other damage-associated signals. The CARD8 inflammasome polymeric complex directly recruits pro-caspase-1 (proCASP1) independently of PYCARD/ASC. Interacts (via CARD domain) with CASP1 (via CARD domain); leading to CASP1 activation. Post-translationally, undergoes autocatalytic processing within the FIIND domain to generate the N-terminal and C-terminal parts, which are associated non-covalently in absence of pathogens and other damage-associated signals. Ubiquitinated by the N-end rule pathway in response to pathogens and other damage-associated signals, leading to its degradation by the proteasome and subsequent release of the cleaved C-terminal part of the protein (Caspase recruitment domain-containing protein 8, C-terminus), which polymerizes and forms the CARD8 inflammasome.

It is found in the cytoplasm. Its subcellular location is the nucleus. It localises to the inflammasome. Its activity is regulated as follows. CARD8 inflammasome is inhibited by DPP8 and DPP9, which sequester the C-terminal fragment of CARD8 (Caspase recruitment domain-containing protein 8, C-terminus) in a ternary complex, thereby preventing CARD8 oligomerization and activation. CARD8 inflammasome is activated by Val-boroPro (Talabostat, PT-100), an inhibitor of dipeptidyl peptidases DPP8 and DPP9. Val-boroPro relieves inhibition of DPP8 and/or DPP9 by inducing the proteasome-mediated destruction of the N-terminal part of CARD8, releasing its C-terminal part from autoinhibition. In terms of biological role, inflammasome sensor, which mediates inflammasome activation in response to various pathogen-associated signals, leading to subsequent pyroptosis of CD4(+) T-cells and macrophages. Inflammasomes are supramolecular complexes that assemble in the cytosol in response to pathogens and other damage-associated signals and play critical roles in innate immunity and inflammation. Acts as a recognition receptor (PRR): recognizes specific pathogens and other damage-associated signals, such as Val-boroPro inhibitor, and mediates CARD8 inflammasome activation. In response to pathogen-associated signals, the N-terminal part of CARD8 is degraded by the proteasome, releasing the cleaved C-terminal part of the protein (Caspase recruitment domain-containing protein 8, C-terminus), which polymerizes to initiate the formation of the inflammasome complex: the CARD8 inflammasome directly recruits pro-caspase-1 (proCASP1) independently of PYCARD/ASC and promotes caspase-1 (CASP1) activation, which subsequently cleaves and activates inflammatory cytokines IL1B and IL18 and gasdermin-D (GSDMD), leading to pyroptosis. Also acts as a negative regulator of the NLRP3 inflammasome. May also act as an inhibitor of NF-kappa-B activation. Functionally, constitutes the precursor of the CARD8 inflammasome, which mediates autoproteolytic processing within the FIIND domain to generate the N-terminal and C-terminal parts, which are associated non-covalently in absence of pathogens and other damage-associated signals. Its function is as follows. Regulatory part that prevents formation of the CARD8 inflammasome: in absence of pathogens and other damage-associated signals, interacts with the C-terminal part of CARD8 (Caspase recruitment domain-containing protein 8, C-terminus), preventing activation of the CARD8 inflammasome. In response to pathogen-associated signals, this part is ubiquitinated by the N-end rule pathway and degraded by the proteasome, releasing the cleaved C-terminal part of the protein, which polymerizes and forms the CARD8 inflammasome. Constitutes the active part of the CARD8 inflammasome. In absence of pathogens and other damage-associated signals, interacts with the N-terminal part of CARD8 (Caspase recruitment domain-containing protein 8, N-terminus), preventing activation of the CARD8 inflammasome. In response to pathogen-associated signals, the N-terminal part of CARD8 is degraded by the proteasome, releasing this form, which polymerizes to form the CARD8 inflammasome complex: the CARD8 inflammasome complex then directly recruits pro-caspase-1 (proCASP1) and promotes caspase-1 (CASP1) activation, leading to gasdermin-D (GSDMD) cleavage and subsequent pyroptosis. This is Caspase recruitment domain-containing protein 8 from Pongo abelii (Sumatran orangutan).